The following is a 404-amino-acid chain: Putative glutamate--cysteine ligase 2 (404 aa).

The segment at 377-404 (GPAGKRAHEGGRSFRPAAGAPMSIRGQE) is disordered.

The protein belongs to the glutamate--cysteine ligase type 2 family. YbdK subfamily.

The catalysed reaction is L-cysteine + L-glutamate + ATP = gamma-L-glutamyl-L-cysteine + ADP + phosphate + H(+). In terms of biological role, ATP-dependent carboxylate-amine ligase which exhibits weak glutamate--cysteine ligase activity. This Pseudomonas aeruginosa (strain UCBPP-PA14) protein is Putative glutamate--cysteine ligase 2.